The following is a 334-amino-acid chain: Procathepsin L (334 aa).

The signal sequence occupies residues 1–17; that stretch reads MNLLLLLAVLCLGTALA. A propeptide spans 18–113 (activation peptide); it reads TPKFDQTFSA…RLFQEPLMLK (96 aa). Glu122 lines the Zn(2+) pocket. Cystine bridges form between Cys135/Cys178 and Cys169/Cys211. Cys138 is a catalytic residue. Zn(2+) contacts are provided by Glu163, Asp184, Glu199, and Glu205. Asn221 carries an N-linked (GlcNAc...) (high mannose) asparagine glycan. 4 residues coordinate Zn(2+): Asp227, Asp250, His253, and Asp275. Cys269 and Cys322 are oxidised to a cystine. His276 is a catalytic residue. Positions 289–290 are excised as a propeptide; that stretch reads DS. Asn300 is a catalytic residue.

It belongs to the peptidase C1 family. Dimer of a heavy and a light chain linked by disulfide bonds. Interacts with Long isoform of CD74/Ii chain; the interaction stabilizes the conformation of mature CTSL. During export along the endocytic pathway, pro-CTSL undergoes several proteolytic cleavages to generate the CTSL single-chain and two-chain mature forms, composed of a heavy chain linked to a light chain by disulfide bonds. Autocleavage; produces the single-chain CTSL after cleavage of the propeptide. The cleavage can be intermolecular. In terms of tissue distribution, expressed in thymus, kidney and liver. Expressed in thyroid epithelial cells. Expressed in cortical thymic epithelial cells. Expressed by antigen presenting cells (APCs) such as dendritic cells and macrophages.

It localises to the lysosome. Its subcellular location is the apical cell membrane. The protein localises to the secreted. The protein resides in the extracellular space. It is found in the cytoplasmic vesicle. It localises to the secretory vesicle. Its subcellular location is the chromaffin granule. It catalyses the reaction Specificity close to that of papain. As compared to cathepsin B, cathepsin L exhibits higher activity toward protein substrates, but has little activity on Z-Arg-Arg-NHMec, and no peptidyl-dipeptidase activity.. With respect to regulation, long isoform of CD74/Ii chain stabilizes the conformation of mature CTSL by binding to its active site and serving as a chaperone to help maintain a pool of mature enzyme in endocytic compartments and extracellular space of APCs. IFNG enhances the conversion into the CTSL mature and active form. Inhibited by CST6. Inhibited by the glycopeptide antibiotic teicoplanin. Inhibited by amantadine. Its function is as follows. Thiol protease important for the overall degradation of proteins in lysosomes. Involved in the solubilization of cross-linked TG/thyroglobulin and in the subsequent release of thyroid hormone thyroxine (T4) by limited proteolysis of TG/thyroglobulin in the thyroid follicle lumen. In neuroendocrine chromaffin cells secretory vesicles, catalyzes the prohormone proenkephalin processing to the active enkephalin peptide neurotransmitter. In thymus, regulates CD4(+) T cell positive selection by generating the major histocompatibility complex class II (MHCII) bound peptide ligands presented by cortical thymic epithelial cells. Also mediates invariant chain processing in cortical thymic epithelial cells. Major elastin-degrading enzyme at neutral pH. Accumulates as a mature and active enzyme in the extracellular space of antigen presenting cells (APCs) to regulate degradation of the extracellular matrix in the course of inflammation. Secreted form generates endostatin from COL18A1. Critical for cardiac morphology and function. Plays an important role in hair follicle morphogenesis and cycling, as well as epidermal differentiation. Required for maximal stimulation of steroidogenesis by TIMP1. The sequence is that of Procathepsin L from Mus musculus (Mouse).